The chain runs to 115 residues: NAD(P)H-quinone oxidoreductase subunit M (115 aa).

It belongs to the complex I NdhM subunit family. As to quaternary structure, NDH-1 can be composed of about 15 different subunits; different subcomplexes with different compositions have been identified which probably have different functions.

The protein localises to the cellular thylakoid membrane. The catalysed reaction is a plastoquinone + NADH + (n+1) H(+)(in) = a plastoquinol + NAD(+) + n H(+)(out). It catalyses the reaction a plastoquinone + NADPH + (n+1) H(+)(in) = a plastoquinol + NADP(+) + n H(+)(out). Functionally, NDH-1 shuttles electrons from an unknown electron donor, via FMN and iron-sulfur (Fe-S) centers, to quinones in the respiratory and/or the photosynthetic chain. The immediate electron acceptor for the enzyme in this species is believed to be plastoquinone. Couples the redox reaction to proton translocation, and thus conserves the redox energy in a proton gradient. Cyanobacterial NDH-1 also plays a role in inorganic carbon-concentration. This is NAD(P)H-quinone oxidoreductase subunit M from Trichodesmium erythraeum (strain IMS101).